We begin with the raw amino-acid sequence, 380 residues long: Probable transposase for insertion sequence element IS701 (380 aa).

Involved in the transposition of the insertion sequence. The chain is Probable transposase for insertion sequence element IS701 from Microchaete diplosiphon (Fremyella diplosiphon).